The following is a 213-amino-acid chain: MSQLTIALTKGRILLETLPLLEAAGIAPLEDISKSRKLTFETTSPDVRLLILRGSDVPTYVEFGAADVGVSGKDTILEHGSTGFYEPLDLRIAKCRLMTAGIAGETLKPGRIRVATKYTNLAKQYYAEQGRQVDLIKLYGAMELAPILSLADEIVDIVDTGNTLKANGLEARDHIADISSRLIVNKASMKMKHQQIEALIDAISSAVNERAAA.

It belongs to the ATP phosphoribosyltransferase family. Short subfamily. Heteromultimer composed of HisG and HisZ subunits.

It localises to the cytoplasm. The enzyme catalyses 1-(5-phospho-beta-D-ribosyl)-ATP + diphosphate = 5-phospho-alpha-D-ribose 1-diphosphate + ATP. It functions in the pathway amino-acid biosynthesis; L-histidine biosynthesis; L-histidine from 5-phospho-alpha-D-ribose 1-diphosphate: step 1/9. In terms of biological role, catalyzes the condensation of ATP and 5-phosphoribose 1-diphosphate to form N'-(5'-phosphoribosyl)-ATP (PR-ATP). Has a crucial role in the pathway because the rate of histidine biosynthesis seems to be controlled primarily by regulation of HisG enzymatic activity. This is ATP phosphoribosyltransferase from Saccharophagus degradans (strain 2-40 / ATCC 43961 / DSM 17024).